We begin with the raw amino-acid sequence, 271 residues long: Probable iron transport system membrane protein HI_0359 (271 aa).

8 helical membrane passes run 17–37, 55–75, 93–113, 131–151, 168–188, 194–214, 221–241, and 245–265; these read ALLT…YLVL, IVLA…SGIF, TAMG…FTKI, SHQE…LIVF, VAGL…ALTI, VVGV…ALTL, MLWV…ILSY, and ASTG…ALAY.

Belongs to the ABC-3 integral membrane protein family.

Its subcellular location is the cell inner membrane. Part of an ATP-driven transport system HI_0359/HI_0360/HI_0361/HI_0362 for iron. This is Probable iron transport system membrane protein HI_0359 from Haemophilus influenzae (strain ATCC 51907 / DSM 11121 / KW20 / Rd).